A 258-amino-acid chain; its full sequence is Imidazole glycerol phosphate synthase subunit HisF (258 aa).

Residues aspartate 11 and aspartate 130 contribute to the active site.

It belongs to the HisA/HisF family. In terms of assembly, heterodimer of HisH and HisF.

The protein resides in the cytoplasm. The catalysed reaction is 5-[(5-phospho-1-deoxy-D-ribulos-1-ylimino)methylamino]-1-(5-phospho-beta-D-ribosyl)imidazole-4-carboxamide + L-glutamine = D-erythro-1-(imidazol-4-yl)glycerol 3-phosphate + 5-amino-1-(5-phospho-beta-D-ribosyl)imidazole-4-carboxamide + L-glutamate + H(+). It participates in amino-acid biosynthesis; L-histidine biosynthesis; L-histidine from 5-phospho-alpha-D-ribose 1-diphosphate: step 5/9. Functionally, IGPS catalyzes the conversion of PRFAR and glutamine to IGP, AICAR and glutamate. The HisF subunit catalyzes the cyclization activity that produces IGP and AICAR from PRFAR using the ammonia provided by the HisH subunit. The protein is Imidazole glycerol phosphate synthase subunit HisF of Escherichia coli O7:K1 (strain IAI39 / ExPEC).